A 499-amino-acid polypeptide reads, in one-letter code: Serine/threonine-protein phosphatase 5 (499 aa).

The disordered stretch occupies residues M1–T24. An N-acetylalanine modification is found at A2. TPR repeat units follow at residues A28–N61, A62–Y95, and I96–D129. The tract at residues G184–M499 is catalytic. Positions 242, 244, and 271 each coordinate Mn(2+). H244 lines the substrate pocket. Residues R275 and N303–H304 each bind substrate. Residue N303 coordinates Mn(2+). H304 acts as the Proton donor/acceptor in catalysis. H352 contacts Mn(2+). Substrate is bound by residues R400 and H427. H427 is a Mn(2+) binding site. The interval Q495–M499 is required for autoinhibition.

This sequence belongs to the PPP phosphatase family. PP-5 (PP-T) subfamily. As to quaternary structure, probably forms a complex composed of chaperones HSP90 and HSP70, co-chaperones STIP1/HOP, CDC37, PPP5C, PTGES3/p23, TSC1 and client protein TSC2. Probably forms a complex composed of chaperones HSP90 and HSP70, co-chaperones CDC37, PPP5C, TSC1 and client protein TSC2, CDK4, AKT, RAF1 and NR3C1; this complex does not contain co-chaperones STIP1/HOP and PTGES3/p23. Part of a complex with HSP90/HSP90AA1 and steroid receptors. Interacts (via TPR repeats) with HSP90AA1 (via TPR repeat-binding motif) or HSPA1A/HSPA1B; the interaction is direct and activates the phosphatase activity. Dissociates from HSPA1A/HSPA1B and HSP90AA1 in response to arachidonic acid. Interacts with CPNE1 (via VWFA domain). Interacts with CDC16, CDC27. Interacts with KLHDC10 (via the 6 Kelch repeats); inhibits the phosphatase activity on MAP3K5. Interacts with ATM and ATR; both interactions are induced by DNA damage and enhance ATM and ATR kinase activity. Interacts with RAD17; reduced by DNA damage. Interacts with nuclear receptors such as NR3C1/GCR and PPARG (activated by agonist); regulates their transactivation activities. Interacts (via TPR repeats) with S100 proteins S100A1, S100A2, S100A6, S100B and S100P; the interactions are calcium-dependent, strongly activate PPP5C phosphatase activity and compete with HSP90AA1 and MAP3K5 interactions. Interacts with SMAD2 and SMAD3 but not with SMAD1; decreases SMAD3 phosphorylation and protein levels. Interacts (via TPR repeats) with CRY1 and CRY2; the interaction with CRY2 down-regulates the phosphatase activity on CSNK1E. Interacts (via TPR repeats) with the active form of RAC1, GNA12 or GNA13; these interactions activate the phosphatase activity and translocate PPP5C to the cell membrane. Interacts with FLCN. Mg(2+) serves as cofactor. Mn(2+) is required as a cofactor. Activated by at least two different proteolytic cleavages producing a 56 kDa and a 50 kDa form. In terms of tissue distribution, expressed in liver (at protein level) and brain, enriched in suprachiasmatic nuclei.

Its subcellular location is the nucleus. The protein resides in the cytoplasm. It localises to the cell membrane. The enzyme catalyses O-phospho-L-seryl-[protein] + H2O = L-seryl-[protein] + phosphate. The catalysed reaction is O-phospho-L-threonyl-[protein] + H2O = L-threonyl-[protein] + phosphate. With respect to regulation, autoinhibited. In the autoinhibited state, the TPR domain interacts with the catalytic region and prevents substrate access to the catalytic pocket. Allosterically activated by various polyunsaturated fatty acids, free long-chain fatty-acids and long-chain fatty acyl-CoA esters, arachidonic acid being the most effective activator. HSP90A and probably RAC1, GNA12 and GNA13 can also release the autoinhibition by the TPR repeat. Activation by RAC1, GNA12 and GNA13 is synergistic with the one produced by fatty acids binding. Inhibited by okadaic acid. Its function is as follows. Serine/threonine-protein phosphatase that dephosphorylates a myriad of proteins involved in different signaling pathways including the kinases CSNK1E, ASK1/MAP3K5, PRKDC and RAF1, the nuclear receptors NR3C1, PPARG, ESR1 and ESR2, SMAD proteins and TAU/MAPT. Implicated in wide ranging cellular processes, including apoptosis, differentiation, DNA damage response, cell survival, regulation of ion channels or circadian rhythms, in response to steroid and thyroid hormones, calcium, fatty acids, TGF-beta as well as oxidative and genotoxic stresses. Participates in the control of DNA damage response mechanisms such as checkpoint activation and DNA damage repair through, for instance, the regulation ATM/ATR-signaling and dephosphorylation of PRKDC and TP53BP1. Inhibits ASK1/MAP3K5-mediated apoptosis induced by oxidative stress. Plays a positive role in adipogenesis, mainly through the dephosphorylation and activation of PPARG transactivation function. Also dephosphorylates and inhibits the anti-adipogenic effect of NR3C1. Regulates the circadian rhythms, through the dephosphorylation and activation of CSNK1E. May modulate TGF-beta signaling pathway by the regulation of SMAD3 phosphorylation and protein expression levels. Dephosphorylates and may play a role in the regulation of TAU/MAPT. Through their dephosphorylation, may play a role in the regulation of ions channels such as KCNH2. Dephosphorylate FNIP1, disrupting interaction with HSP90AA1/Hsp90. The chain is Serine/threonine-protein phosphatase 5 (Ppp5c) from Mus musculus (Mouse).